A 208-amino-acid polypeptide reads, in one-letter code: MKPIRIGIGGPVGSGKTHLVEQLTRAMHESYELAVITNDIYTKEDAQFLVKHGILPEDRIIGVETGGCPHTAIREDASMNFEAIHELKQRFTNLDIIFVESGGDNLSATFSPELVDGFIYVIDVAEGQDIPRKGGPGVTRSDLLVINKIDLAPYVEVDLDIMEEDAKQARGERPFVFTDQKRGKGIETIIDWIKRELLLEDMVKEPSV.

10–17 (GPVGSGKT) provides a ligand contact to GTP.

It belongs to the SIMIBI class G3E GTPase family. UreG subfamily. In terms of assembly, homodimer. UreD, UreF and UreG form a complex that acts as a GTP-hydrolysis-dependent molecular chaperone, activating the urease apoprotein by helping to assemble the nickel containing metallocenter of UreC. The UreE protein probably delivers the nickel.

Its subcellular location is the cytoplasm. Functionally, facilitates the functional incorporation of the urease nickel metallocenter. This process requires GTP hydrolysis, probably effectuated by UreG. The protein is Urease accessory protein UreG of Halalkalibacterium halodurans (strain ATCC BAA-125 / DSM 18197 / FERM 7344 / JCM 9153 / C-125) (Bacillus halodurans).